The following is a 428-amino-acid chain: 26S proteasome regulatory subunit 6B homolog (428 aa).

Met1 carries the N-acetylmethionine modification. 213-220 provides a ligand contact to ATP; it reads GPPGTGKT. Residue Lys280 forms a Glycyl lysine isopeptide (Lys-Gly) (interchain with G-Cter in ubiquitin) linkage.

It belongs to the AAA ATPase family. In terms of processing, N-acetylated by NAT3.

The protein resides in the cytoplasm. The protein localises to the nucleus. The 26S proteasome is involved in the ATP-dependent degradation of ubiquitinated proteins. The regulatory (or ATPase) complex confers ATP dependency and substrate specificity to the 26S complex. The polypeptide is 26S proteasome regulatory subunit 6B homolog (RPT3) (Saccharomyces cerevisiae (strain ATCC 204508 / S288c) (Baker's yeast)).